We begin with the raw amino-acid sequence, 291 residues long: 4-hydroxy-tetrahydrodipicolinate synthase (291 aa).

Residue threonine 44 coordinates pyruvate. Tyrosine 132 functions as the Proton donor/acceptor in the catalytic mechanism. Catalysis depends on lysine 160, which acts as the Schiff-base intermediate with substrate. Position 202 (isoleucine 202) interacts with pyruvate.

This sequence belongs to the DapA family. As to quaternary structure, homotetramer; dimer of dimers.

It localises to the cytoplasm. The catalysed reaction is L-aspartate 4-semialdehyde + pyruvate = (2S,4S)-4-hydroxy-2,3,4,5-tetrahydrodipicolinate + H2O + H(+). The protein operates within amino-acid biosynthesis; L-lysine biosynthesis via DAP pathway; (S)-tetrahydrodipicolinate from L-aspartate: step 3/4. In terms of biological role, catalyzes the condensation of (S)-aspartate-beta-semialdehyde [(S)-ASA] and pyruvate to 4-hydroxy-tetrahydrodipicolinate (HTPA). The polypeptide is 4-hydroxy-tetrahydrodipicolinate synthase (Sphingopyxis alaskensis (strain DSM 13593 / LMG 18877 / RB2256) (Sphingomonas alaskensis)).